Here is an 86-residue protein sequence, read N- to C-terminus: MAEKFNLQDRFLNILRTSKIPVKVYLVNGFQTKGIIRSFDNFTMLLENGNQQNLIYKHAVSTIMPESFVRLTSKQQQEGKDSDEEE.

The 61-residue stretch at 9 to 69 folds into the Sm domain; that stretch reads DRFLNILRTS…VSTIMPESFV (61 aa).

This sequence belongs to the Hfq family. As to quaternary structure, homohexamer.

In terms of biological role, RNA chaperone that binds small regulatory RNA (sRNAs) and mRNAs to facilitate mRNA translational regulation in response to envelope stress, environmental stress and changes in metabolite concentrations. Also binds with high specificity to tRNAs. The sequence is that of RNA-binding protein Hfq from Thermosipho melanesiensis (strain DSM 12029 / CIP 104789 / BI429).